The sequence spans 298 residues: Acetaldehyde dehydrogenase (298 aa).

6-9 (SGNI) contributes to the NAD(+) binding site. The active-site Acyl-thioester intermediate is Cys121. NAD(+) contacts are provided by residues 152–160 (SAGPGTRAN) and Asn271.

It belongs to the acetaldehyde dehydrogenase family.

It carries out the reaction acetaldehyde + NAD(+) + CoA = acetyl-CoA + NADH + H(+). The sequence is that of Acetaldehyde dehydrogenase from Mycobacterium avium (strain 104).